Here is a 470-residue protein sequence, read N- to C-terminus: MTEPSFNTSALIEESIKSAKINVGAKLVLAYSGGVDSEVLAQGLSLYAKSHPEFRYLLVHVHHGLSRNADAWVTHCQKQALDYQLPIEVVQVQVKTGPRLSIEAEARRARYKAITSLMDSADVLLTAHHLDDQLETVLLALKRGLGPKGLSAMGALQVFDGDKQLLRPLLNVSREQIEAKAASLSLPHIEDESNTDDKYDRNFLRLQIIPKLKSRWSAIATTASRSAALCAQQQAVIDDEVSARLPNFIELVPYGEGTALNLDLLSHQTPNWQALLLRGYIESSGFAPVSQIQLEQLLSQLLTAKPDANLEVRIADMLVRRFREKAYLSSYRPHKPKSLESIELTLESEVHFVQEINIPLLSNIRVEVLEDDGGERVRLPLIEEKVSVRFSAVGSLRCHPHNRQKGRELKKLWQEYGVPPWERERVPLIFYNEKLVCAVGYWVEHSFQSAEHETGLRFSIAIVSNECESI.

Residue 32–37 (SGGVDS) coordinates ATP.

Belongs to the tRNA(Ile)-lysidine synthase family.

It localises to the cytoplasm. It carries out the reaction cytidine(34) in tRNA(Ile2) + L-lysine + ATP = lysidine(34) in tRNA(Ile2) + AMP + diphosphate + H(+). Its function is as follows. Ligates lysine onto the cytidine present at position 34 of the AUA codon-specific tRNA(Ile) that contains the anticodon CAU, in an ATP-dependent manner. Cytidine is converted to lysidine, thus changing the amino acid specificity of the tRNA from methionine to isoleucine. This chain is tRNA(Ile)-lysidine synthase, found in Shewanella woodyi (strain ATCC 51908 / MS32).